The chain runs to 409 residues: uncharacterized protein (409 aa).

3 disordered regions span residues 12-32 (ENTE…LHCP), 133-160 (EVST…SREQ), and 194-213 (TVSS…GLST). The segment covering 134–160 (VSTQKSWSSEKNWSGLSQGPGTASREQ) has biased composition (polar residues).

This is an uncharacterized protein from Mus musculus (Mouse).